We begin with the raw amino-acid sequence, 257 residues long: ATP synthase subunit a (257 aa).

Helical transmembrane passes span 34–54 (ITNIGLYMTIAAFIAFYFSIL), 93–113 (YFPFMYTLFIFILINNLIGMV), 122–142 (HFILTFSLSFTVVLGATVLGF), 149–169 (FFSLFVPAGCPLGLLPLLVLI), 187–207 (ANILSGHMLLNILSGFTYNIM), and 210–230 (GIIFFILGLLPLAFIIAFSGL).

This sequence belongs to the ATPase A chain family. In terms of assembly, F-type ATPases have 2 components, CF(1) - the catalytic core - and CF(0) - the membrane proton channel. CF(1) has five subunits: alpha(3), beta(3), gamma(1), delta(1), epsilon(1). CF(0) has three main subunits: a, b and c.

Its subcellular location is the mitochondrion inner membrane. Functionally, mitochondrial membrane ATP synthase (F(1)F(0) ATP synthase or Complex V) produces ATP from ADP in the presence of a proton gradient across the membrane which is generated by electron transport complexes of the respiratory chain. F-type ATPases consist of two structural domains, F(1) - containing the extramembraneous catalytic core and F(0) - containing the membrane proton channel, linked together by a central stalk and a peripheral stalk. During catalysis, ATP synthesis in the catalytic domain of F(1) is coupled via a rotary mechanism of the central stalk subunits to proton translocation. Key component of the proton channel; it may play a direct role in the translocation of protons across the membrane. This chain is ATP synthase subunit a (ATP6), found in Cochliobolus heterostrophus (Southern corn leaf blight fungus).